A 628-amino-acid chain; its full sequence is F-box only protein 21 (628 aa).

One can recognise an F-box domain in the interval 28–84; the sequence is SCLVNLPGEVLEYILCCGSLTAADIGRVSSTCRRLRELCQSSGKVWKEQFRVRWPSL.

Directly interacts with SKP1 and CUL1.

Its function is as follows. Substrate-recognition component of the SCF (SKP1-CUL1-F-box protein)-type E3 ubiquitin ligase complex. This chain is F-box only protein 21 (FBXO21), found in Homo sapiens (Human).